The following is a 182-amino-acid chain: Photosystem I assembly protein Ycf4 (182 aa).

Helical transmembrane passes span 22 to 42 (WAII…SSYL) and 66 to 86 (FYGI…LFSV).

Belongs to the Ycf4 family.

It localises to the plastid. The protein resides in the chloroplast thylakoid membrane. Functionally, seems to be required for the assembly of the photosystem I complex. The sequence is that of Photosystem I assembly protein Ycf4 from Tupiella akineta (Green alga).